Here is a 293-residue protein sequence, read N- to C-terminus: Fructose-bisphosphate aldolase (293 aa).

Ser-50 lines the D-glyceraldehyde 3-phosphate pocket. The active-site Proton donor is the Asp-85. His-86, Asp-106, Glu-136, and His-178 together coordinate Zn(2+). Gly-179 is a dihydroxyacetone phosphate binding site. His-208 contributes to the Zn(2+) binding site. Dihydroxyacetone phosphate is bound by residues 209-211 and 230-233; these read GGS and NVNT.

It belongs to the class II fructose-bisphosphate aldolase family. Zn(2+) is required as a cofactor.

The enzyme catalyses beta-D-fructose 1,6-bisphosphate = D-glyceraldehyde 3-phosphate + dihydroxyacetone phosphate. The protein operates within carbohydrate degradation; glycolysis; D-glyceraldehyde 3-phosphate and glycerone phosphate from D-glucose: step 4/4. Functionally, catalyzes the aldol condensation of dihydroxyacetone phosphate (DHAP or glycerone-phosphate) with glyceraldehyde 3-phosphate (G3P) to form fructose 1,6-bisphosphate (FBP) in gluconeogenesis and the reverse reaction in glycolysis. In Streptococcus pyogenes serotype M1, this protein is Fructose-bisphosphate aldolase (fba).